The following is a 317-amino-acid chain: Pyridoxal 5'-phosphate synthase subunit PdxS (317 aa).

Aspartate 47 lines the D-ribose 5-phosphate pocket. Catalysis depends on lysine 104, which acts as the Schiff-base intermediate with D-ribose 5-phosphate. Glycine 176 is a binding site for D-ribose 5-phosphate. D-glyceraldehyde 3-phosphate is bound at residue arginine 188. D-ribose 5-phosphate-binding positions include glycine 237 and 258–259 (GS).

This sequence belongs to the PdxS/SNZ family. In the presence of PdxT, forms a dodecamer of heterodimers.

The enzyme catalyses aldehydo-D-ribose 5-phosphate + D-glyceraldehyde 3-phosphate + L-glutamine = pyridoxal 5'-phosphate + L-glutamate + phosphate + 3 H2O + H(+). It functions in the pathway cofactor biosynthesis; pyridoxal 5'-phosphate biosynthesis. Functionally, catalyzes the formation of pyridoxal 5'-phosphate from ribose 5-phosphate (RBP), glyceraldehyde 3-phosphate (G3P) and ammonia. The ammonia is provided by the PdxT subunit. Can also use ribulose 5-phosphate and dihydroxyacetone phosphate as substrates, resulting from enzyme-catalyzed isomerization of RBP and G3P, respectively. The chain is Pyridoxal 5'-phosphate synthase subunit PdxS from Corynebacterium glutamicum (strain ATCC 13032 / DSM 20300 / JCM 1318 / BCRC 11384 / CCUG 27702 / LMG 3730 / NBRC 12168 / NCIMB 10025 / NRRL B-2784 / 534).